The primary structure comprises 492 residues: RNA-binding protein Nova-2 (492 aa).

Residues 10-26 (KRPLETPPEVVCTKRSN) carry the Bipartite nuclear localization signal motif. The 68-residue stretch at 32–99 (EYFLKVLIPS…EALNAVHSFI (68 aa)) folds into the KH 1 domain. Lys-112 participates in a covalent cross-link: Glycyl lysine isopeptide (Lys-Gly) (interchain with G-Cter in SUMO2). KH domains follow at residues 130-196 (AKQA…VSAI) and 406-473 (KELV…QYLI).

In terms of assembly, interacts with PTBP2; the interaction is direct. Brain. Expression restricted to astrocytes.

Its subcellular location is the nucleus. Its function is as follows. Functions to regulate alternative splicing in neurons by binding pre-mRNA in a sequence-specific manner to activate exon inclusion or exclusion. It binds specifically to the sequences 5'-YCAY-3' and regulates splicing in only a subset of regulated exons. Binding to an exonic 5'-YCAY-3' cluster changes the protein complexes assembled on pre-mRNA, blocking U1 snRNP binding and exon inclusion, whereas binding to an intronic 5'-YCAY-3' cluster enhances spliceosome assembly and exon inclusion. With NOVA1, they perform unique biological functions in different brain areas and cell types. Uniquely regulates alternative splicing events of a series of axon guidance related genes during cortical development, being essential for central nervous system development by regulating neural networks wiring. Regulates differentially alternative splicing on the same transcripts expressed in different neurons. This includes functional differences in transcripts expressed in cortical and cerebellar excitatory versus inhibitory neurons where is required for, respectively, development of laminar structure and motor coordination and synapse formation. Also the regulation the regulation of intron retention can sequester the trans-acting splicing factor PTBP2, acting as a variable cis-acting scaffolding platform for PTBP2 across various natural conditions. The chain is RNA-binding protein Nova-2 from Homo sapiens (Human).